The following is a 363-amino-acid chain: Aminomethyltransferase (363 aa).

It belongs to the GcvT family. In terms of assembly, the glycine cleavage system is composed of four proteins: P, T, L and H.

It catalyses the reaction N(6)-[(R)-S(8)-aminomethyldihydrolipoyl]-L-lysyl-[protein] + (6S)-5,6,7,8-tetrahydrofolate = N(6)-[(R)-dihydrolipoyl]-L-lysyl-[protein] + (6R)-5,10-methylene-5,6,7,8-tetrahydrofolate + NH4(+). Functionally, the glycine cleavage system catalyzes the degradation of glycine. The protein is Aminomethyltransferase of Nitrosomonas europaea (strain ATCC 19718 / CIP 103999 / KCTC 2705 / NBRC 14298).